A 448-amino-acid chain; its full sequence is Gametocyte surface protein P45/48 (448 aa).

The first 27 residues, 1-27, serve as a signal peptide directing secretion; sequence MMLYISAKKAQVAFILYIVLVLRIISG. One can recognise a 6-Cys 1 domain in the interval 45 to 182; that stretch reads IGYKCNFSNE…AMVHVRVLKY (138 aa). Disulfide bonds link Cys49/Cys71 and Cys102/Cys156. Asn50, Asn131, Asn190, Asn204, Asn254, Asn299, and Asn303 each carry an N-linked (GlcNAc...) asparagine glycan. The 6-Cys 2 domain maps to 294-426; sequence VIHGCNFSSN…KSAYMTVTID (133 aa). 3 cysteine pairs are disulfide-bonded: Cys298-Cys327, Cys344-Cys412, and Cys352-Cys410. Asp426 is lipidated: GPI-anchor amidated aspartate. A propeptide spans 427–448 (removed in mature form); sequence SAYYGFLAKTFIFLIVAILLYI.

In terms of assembly, heterodimer; heterodimerizes with PF230.

Its subcellular location is the cell surface. It is found in the cell membrane. Gametocyte surface protein required for male fertility. This chain is Gametocyte surface protein P45/48 (PF45/48), found in Plasmodium falciparum (isolate 3D7).